We begin with the raw amino-acid sequence, 152 residues long: Deoxyuridine 5'-triphosphate nucleotidohydrolase (152 aa).

Substrate-binding positions include 71–73 (RSG), Asn-84, 88–90 (LID), and Met-98.

The protein belongs to the dUTPase family. In terms of assembly, homotrimer. Requires Mg(2+) as cofactor.

It carries out the reaction dUTP + H2O = dUMP + diphosphate + H(+). Its pathway is pyrimidine metabolism; dUMP biosynthesis; dUMP from dCTP (dUTP route): step 2/2. This enzyme is involved in nucleotide metabolism: it produces dUMP, the immediate precursor of thymidine nucleotides and it decreases the intracellular concentration of dUTP so that uracil cannot be incorporated into DNA. The protein is Deoxyuridine 5'-triphosphate nucleotidohydrolase of Escherichia coli O157:H7.